The sequence spans 343 residues: Heat-inducible transcription repressor HrcA (343 aa).

The protein belongs to the HrcA family.

Its function is as follows. Negative regulator of class I heat shock genes (grpE-dnaK-dnaJ and groELS operons). Prevents heat-shock induction of these operons. This chain is Heat-inducible transcription repressor HrcA, found in Mycolicibacterium paratuberculosis (strain ATCC BAA-968 / K-10) (Mycobacterium paratuberculosis).